The sequence spans 341 residues: Antihemorrhagic factor BJ46a (341 aa).

The first 19 residues, methionine 1 to serine 19, serve as a signal peptide directing secretion. 2 Cystatin fetuin-A-type domains span residues valine 22–histidine 130 and arginine 141–valine 254. The Cell attachment site signature appears at arginine 23–aspartate 25. 6 cysteine pairs are disulfide-bonded: cysteine 28-cysteine 332, cysteine 85-cysteine 96, cysteine 110-cysteine 129, cysteine 143-cysteine 146, cysteine 205-cysteine 217, and cysteine 230-cysteine 253. N-linked (GlcNAc...) asparagine glycosylation occurs at asparagine 95. Asparagine 204 carries an N-linked (GlcNAc...) asparagine glycan. 2 N-linked (GlcNAc...) asparagine glycosylation sites follow: asparagine 282 and asparagine 293.

In terms of assembly, homodimer. Expressed by the liver.

Its subcellular location is the secreted. In terms of biological role, potent inhibitor of hemorrhagic activity but also proteolytic activities of atrolysin C and jararhagin. Inhibition occurs by formation of a non-covalent complex between BJ46a and the proteinases at their metalloproteinase domains. In Bothrops jararaca (Jararaca), this protein is Antihemorrhagic factor BJ46a.